The primary structure comprises 213 residues: 24 kDa ookinete surface protein (213 aa).

The signal sequence occupies residues 1-28; that stretch reads MNFKYSFIFLFFIQLAIRYNNAKITVDT. The 30-residue stretch at 30-59 folds into the EGF-like 1; truncated domain; that stretch reads CKGGKLIQMSNHYECKCPSGYALKTENTCE. 2 consecutive EGF-like domains span residues 60 to 108 and 108 to 148; these read PIVK…NICK and KPTR…GKCT. Cystine bridges form between Cys64–Cys80, Cys74–Cys94, Cys96–Cys107, Cys112–Cys122, Cys117–Cys134, and Cys136–Cys147. The EGF-like 4; truncated domain occupies 151-175; sequence GETKCLLKCKAAEECKLTGKHYECV. Residue Asn190 is the site of GPI-anchor amidated asparagine attachment. Asn190 carries N-linked (GlcNAc...) asparagine glycosylation. Residues 191–213 constitute a propeptide, removed in mature form; that stretch reads SSFMNGMSIISIIALLVIYVIVM.

The protein localises to the cell membrane. The protein is 24 kDa ookinete surface protein of Plasmodium berghei (strain Anka).